The sequence spans 104 residues: Large ribosomal subunit protein uL24 (104 aa).

The protein belongs to the universal ribosomal protein uL24 family. As to quaternary structure, part of the 50S ribosomal subunit.

In terms of biological role, one of two assembly initiator proteins, it binds directly to the 5'-end of the 23S rRNA, where it nucleates assembly of the 50S subunit. Functionally, one of the proteins that surrounds the polypeptide exit tunnel on the outside of the subunit. The protein is Large ribosomal subunit protein uL24 of Corynebacterium jeikeium (strain K411).